Reading from the N-terminus, the 803-residue chain is Phenylalanine--tRNA ligase beta subunit (803 aa).

One can recognise a tRNA-binding domain in the interval 39–150; that stretch reads AKVLAPFTIA…ADAPVGAAYA (112 aa). The B5 domain occupies 400–475; the sequence is ADDKIIDFPL…RIVGVDKVPL (76 aa). Mg(2+) contacts are provided by Asp-453, Asp-459, Glu-462, and Glu-463. The FDX-ACB domain maps to 709 to 802; the sequence is SAFHPVSRDF…VTKKTGGSLR (94 aa).

Belongs to the phenylalanyl-tRNA synthetase beta subunit family. Type 1 subfamily. Tetramer of two alpha and two beta subunits. The cofactor is Mg(2+).

The protein resides in the cytoplasm. The enzyme catalyses tRNA(Phe) + L-phenylalanine + ATP = L-phenylalanyl-tRNA(Phe) + AMP + diphosphate + H(+). The polypeptide is Phenylalanine--tRNA ligase beta subunit (Rhodopseudomonas palustris (strain ATCC BAA-98 / CGA009)).